Here is a 315-residue protein sequence, read N- to C-terminus: Ribosomal RNA small subunit methyltransferase H (315 aa).

S-adenosyl-L-methionine is bound by residues Gly37–His39, Asp57, Phe83, Asp105, and Gln112.

The protein belongs to the methyltransferase superfamily. RsmH family.

The protein localises to the cytoplasm. The catalysed reaction is cytidine(1402) in 16S rRNA + S-adenosyl-L-methionine = N(4)-methylcytidine(1402) in 16S rRNA + S-adenosyl-L-homocysteine + H(+). Specifically methylates the N4 position of cytidine in position 1402 (C1402) of 16S rRNA. The sequence is that of Ribosomal RNA small subunit methyltransferase H from Pseudomonas putida (strain ATCC 700007 / DSM 6899 / JCM 31910 / BCRC 17059 / LMG 24140 / F1).